The primary structure comprises 71 residues: Small ribosomal subunit protein bS21B (71 aa).

This sequence belongs to the bacterial ribosomal protein bS21 family.

The sequence is that of Small ribosomal subunit protein bS21B from Rhizobium johnstonii (strain DSM 114642 / LMG 32736 / 3841) (Rhizobium leguminosarum bv. viciae).